A 307-amino-acid polypeptide reads, in one-letter code: Glycine--tRNA ligase alpha subunit (307 aa).

This sequence belongs to the class-II aminoacyl-tRNA synthetase family. As to quaternary structure, tetramer of two alpha and two beta subunits.

It is found in the cytoplasm. The catalysed reaction is tRNA(Gly) + glycine + ATP = glycyl-tRNA(Gly) + AMP + diphosphate. This Levilactobacillus brevis (strain ATCC 367 / BCRC 12310 / CIP 105137 / JCM 1170 / LMG 11437 / NCIMB 947 / NCTC 947) (Lactobacillus brevis) protein is Glycine--tRNA ligase alpha subunit.